Reading from the N-terminus, the 395-residue chain is Neuromedin-U receptor 2 (395 aa).

The Extracellular portion of the chain corresponds to 1-41; the sequence is MGKLENASWIHDSLMKYLNSTEEYLAYLCGPKRSDLSLPVS. Asn-6 and Asn-19 each carry an N-linked (GlcNAc...) asparagine glycan. Residues 42 to 62 traverse the membrane as a helical segment; it reads VVYALIFVVGVIGNLLVCLVI. Residues 63 to 74 are Cytoplasmic-facing; that stretch reads ARHQTLKTPTNY. The helical transmembrane segment at 75 to 95 threads the bilayer; the sequence is YLFSLAVSDLLVLLLGMPLEV. Topologically, residues 96 to 115 are extracellular; that stretch reads YELWHNYPFLFGPVGCYFKT. Cys-111 and Cys-196 are oxidised to a cystine. Residues 116–138 form a helical membrane-spanning segment; the sequence is ALFETVCFASILSVTTVSIERYV. The Cytoplasmic segment spans residues 139-157; that stretch reads AIVHPFRAKLESTRRRALR. A helical transmembrane segment spans residues 158–178; it reads ILSLVWSFSVVFSLPNTSIHG. Topologically, residues 179–212 are extracellular; it reads IKFQQFPNGSSVPGSATCTVTKPIWVYNFIIQAT. An N-linked (GlcNAc...) asparagine glycan is attached at Asn-186. Residues 213 to 233 traverse the membrane as a helical segment; sequence SFLFYILPMTLISVLYYLMGL. Topologically, residues 234–257 are cytoplasmic; that stretch reads RLKRDESLEADKVTVNIHRPSRKS. A helical membrane pass occupies residues 258-278; it reads VTKMLFVLVLVFAICWTPFHV. At 279–293 the chain is on the extracellular side; that stretch reads DRLFFSFVDEWTESL. Residues 294–314 traverse the membrane as a helical segment; the sequence is AAVFNLIHVVSGVFFYLSSAV. Topologically, residues 315-395 are cytoplasmic; the sequence is NPIIYNLLSR…TTVPCVEEVP (81 aa).

It belongs to the G-protein coupled receptor 1 family. As to expression, expressed primarily in brain tissues, more specifically in medulla and spinal cord. Widespread distribution in peripheral tissues.

Its subcellular location is the cell membrane. Its function is as follows. Receptor for the neuromedin-U and neuromedin-S neuropeptides. The polypeptide is Neuromedin-U receptor 2 (Nmur2) (Mus musculus (Mouse)).